The primary structure comprises 828 residues: MQGTPTMKIIENILKNHLLQPLSQNIFVLTNNYITEVQKFSPLSKNTNLVVGQILNFQKIQDSQKLNLVEVNIGIKVVKIVCGASNLQNGKKVIVASEGSFLEGINSTLKNKKIYGVFSEGMLCALEELGISNKFLTPQEQEGIYLFDDPNDQIALGSNALIPLGMDGFILELGITPNRGDLLSHIGFAKDLQAVLASQNSNKKKEKKTINYKTKNSKDQTNRKTTPKLNPDFFAKLPQSPLKVQIESDSCYEYNVCILENITIKPSPLWLRNTLLQSGINPINNVVDITNLILIEYGIPLHAFDSGTIQKIKVRKAFPQETITTLNQNDFVLDENDLVITDGKKAIALAGIVGLLESSIKPTTTKIILEAAYFSPQTIAQTCQKLKNKTESSLRFERGIDQNLIPLAFQKACQLLVTLANAKITYQPTITKQKIRTNPTISLDLDFITRKIGFSLCPTQIKNWLLNLDYQIHTPKNLTLQNKNEQLNLQAPLRRYDVKIKEDVISDLTRFYGCHKLPPQTIQIPTQGKLTLKQKNIRELRKLLVNLGFYETITYSLISSEMFEAFAPQKPFIKIMNPLSQDKMILRQSLLSSLVEILSYQHKRQTFDTAFFEIGKAYFPNQEKLSLAFVLSGNFLNTLWHKQDVSSSFFVTKGILEKISSFLGITLTYQKTQKHSNFHPGMQANLLFNNQIIGVIGKTHPQLNAKHHLKESFLCELFLSDEILNTTKTLTFRPIPKFPTVIRDLSFLVDTKYSFYQIEQIIKQTTPFDLIKCELFDVYQTPTTKEKQSFALRFFFNNLDKNLEKQDVEHCMKKITYNLIKHFRIEIR.

Residues 43-161 (LSKNTNLVVG…DQIALGSNAL (119 aa)) enclose the tRNA-binding domain. Positions 203–230 (KKKEKKTINYKTKNSKDQTNRKTTPKLN) are disordered. The B5 domain occupies 436-519 (RTNPTISLDL…RFYGCHKLPP (84 aa)). Mg(2+)-binding residues include D497, D503, and D507. The FDX-ACB domain maps to 736 to 828 (PKFPTVIRDL…LIKHFRIEIR (93 aa)).

This sequence belongs to the phenylalanyl-tRNA synthetase beta subunit family. Type 1 subfamily. In terms of assembly, tetramer of two alpha and two beta subunits. It depends on Mg(2+) as a cofactor.

It is found in the cytoplasm. It catalyses the reaction tRNA(Phe) + L-phenylalanine + ATP = L-phenylalanyl-tRNA(Phe) + AMP + diphosphate + H(+). The polypeptide is Phenylalanine--tRNA ligase beta subunit (Aster yellows witches'-broom phytoplasma (strain AYWB)).